We begin with the raw amino-acid sequence, 526 residues long: Carotenoid cleavage oxygenase 1 (526 aa).

A disordered region spans residues M1–A33. Piceatannol is bound by residues Y133 and K164. The trans-resveratrol site is built by Y133 and K164. Residues H197, H248, and H313 each contribute to the Fe cation site. Residue E383 participates in piceatannol binding. Residue E383 coordinates trans-resveratrol. H510 is a Fe cation binding site.

This sequence belongs to the carotenoid oxygenase family. The cofactor is Fe(2+).

It carries out the reaction trans-resveratrol + O2 = 3,5-dihydroxybenzaldehyde + 4-hydroxybenzaldehyde. It catalyses the reaction piceatannol + O2 = 3,5-dihydroxybenzaldehyde + 3,4-dihydroxybenzaldehyde. Functionally, dioxygenase that cleaves the interphenyl C-alpha-C-beta double bond of resveratrol to yield 3,5-dihydroxybenzaldehyde and 4-hydroxybenzaldehyde. Also cleaves piceatannol, a compound that differs from resveratrol only in the occurrence of an additional hydroxyl group, which leads to the production of 3,4-dihydroxybenzaldehyde and 3,5-hydroxybenzaldehyde. Is not able to cleave trans-stilbene, 4-monohydroxy-trans-stilbene, 3,5-dihydroxy-trans-stilbene (pinosylvin), trismethoxy-resveratrol, and 3,3',5-trihydroxy-4'-methoxystilbene-3-O-beta-D-glucoside. Is not involved in carotenoid metabolism. The polypeptide is Carotenoid cleavage oxygenase 1 (Neurospora crassa (strain ATCC 24698 / 74-OR23-1A / CBS 708.71 / DSM 1257 / FGSC 987)).